The sequence spans 44 residues: uncharacterized protein (44 aa).

This is an uncharacterized protein from Escherichia coli (strain K12).